A 172-amino-acid chain; its full sequence is Co-chaperone protein HscB (172 aa).

The J domain occupies 2–74 (DYFTLFGLPI…LKRAEYMLSL (73 aa)).

The protein belongs to the HscB family. Interacts with HscA and stimulates its ATPase activity. Interacts with IscU.

Its function is as follows. Co-chaperone involved in the maturation of iron-sulfur cluster-containing proteins. Seems to help targeting proteins to be folded toward HscA. The polypeptide is Co-chaperone protein HscB (Pectobacterium carotovorum subsp. carotovorum (strain PC1)).